The sequence spans 469 residues: Glutamate--tRNA ligase 2 (469 aa).

A 'HIGH' region motif is present at residues 8–18 (PSPTGFLHVGG). The short motif at 250 to 254 (KLSKR) is the 'KMSKS' region element. Lysine 253 provides a ligand contact to ATP.

The protein belongs to the class-I aminoacyl-tRNA synthetase family. Glutamate--tRNA ligase type 1 subfamily. As to quaternary structure, monomer.

Its subcellular location is the cytoplasm. It carries out the reaction tRNA(Glu) + L-glutamate + ATP = L-glutamyl-tRNA(Glu) + AMP + diphosphate. Functionally, catalyzes the attachment of glutamate to tRNA(Glu) in a two-step reaction: glutamate is first activated by ATP to form Glu-AMP and then transferred to the acceptor end of tRNA(Glu). This Thermotoga petrophila (strain ATCC BAA-488 / DSM 13995 / JCM 10881 / RKU-1) protein is Glutamate--tRNA ligase 2.